The sequence spans 405 residues: Probable tRNA sulfurtransferase (405 aa).

The 106-residue stretch at 60-165 folds into the THUMP domain; that stretch reads DAVINRLKKV…SNGIFLTSEV (106 aa). Residues 183-184, 208-209, arginine 265, glycine 287, and glutamine 296 contribute to the ATP site; these read ML and HF.

The protein belongs to the ThiI family.

The protein resides in the cytoplasm. The catalysed reaction is [ThiI sulfur-carrier protein]-S-sulfanyl-L-cysteine + a uridine in tRNA + 2 reduced [2Fe-2S]-[ferredoxin] + ATP + H(+) = [ThiI sulfur-carrier protein]-L-cysteine + a 4-thiouridine in tRNA + 2 oxidized [2Fe-2S]-[ferredoxin] + AMP + diphosphate. It carries out the reaction [ThiS sulfur-carrier protein]-C-terminal Gly-Gly-AMP + S-sulfanyl-L-cysteinyl-[cysteine desulfurase] + AH2 = [ThiS sulfur-carrier protein]-C-terminal-Gly-aminoethanethioate + L-cysteinyl-[cysteine desulfurase] + A + AMP + 2 H(+). The protein operates within cofactor biosynthesis; thiamine diphosphate biosynthesis. Catalyzes the ATP-dependent transfer of a sulfur to tRNA to produce 4-thiouridine in position 8 of tRNAs, which functions as a near-UV photosensor. Also catalyzes the transfer of sulfur to the sulfur carrier protein ThiS, forming ThiS-thiocarboxylate. This is a step in the synthesis of thiazole, in the thiamine biosynthesis pathway. The sulfur is donated as persulfide by IscS. The sequence is that of Probable tRNA sulfurtransferase from Pediococcus pentosaceus (strain ATCC 25745 / CCUG 21536 / LMG 10740 / 183-1w).